We begin with the raw amino-acid sequence, 228 residues long: Probable septum site-determining protein MinC (228 aa).

Belongs to the MinC family. As to quaternary structure, interacts with MinD and FtsZ.

Functionally, cell division inhibitor that blocks the formation of polar Z ring septums. Rapidly oscillates between the poles of the cell to destabilize FtsZ filaments that have formed before they mature into polar Z rings. Prevents FtsZ polymerization. The protein is Probable septum site-determining protein MinC of Bacillus cytotoxicus (strain DSM 22905 / CIP 110041 / 391-98 / NVH 391-98).